The primary structure comprises 296 residues: Probable DNA-directed RNA polymerase III subunit RPC6 (296 aa).

The protein belongs to the eukaryotic RPC34/RPC39 RNA polymerase subunit family.

Its subcellular location is the nucleus. Its function is as follows. DNA-dependent RNA polymerase catalyzes the transcription of DNA into RNA using the four ribonucleoside triphosphates as substrates. Specific peripheric component of RNA polymerase III which synthesizes small RNAs, such as 5S rRNA and tRNAs. This is Probable DNA-directed RNA polymerase III subunit RPC6 from Caenorhabditis elegans.